A 611-amino-acid polypeptide reads, in one-letter code: Dihydroxy-acid dehydratase (611 aa).

Residue Asp81 participates in Mg(2+) binding. Position 122 (Cys122) interacts with [2Fe-2S] cluster. Positions 123 and 124 each coordinate Mg(2+). The residue at position 124 (Lys124) is an N6-carboxylysine. Residue Cys195 coordinates [2Fe-2S] cluster. Glu491 serves as a coordination point for Mg(2+). Ser517 acts as the Proton acceptor in catalysis.

This sequence belongs to the IlvD/Edd family. Homodimer. [2Fe-2S] cluster serves as cofactor. It depends on Mg(2+) as a cofactor.

It catalyses the reaction (2R)-2,3-dihydroxy-3-methylbutanoate = 3-methyl-2-oxobutanoate + H2O. It carries out the reaction (2R,3R)-2,3-dihydroxy-3-methylpentanoate = (S)-3-methyl-2-oxopentanoate + H2O. It functions in the pathway amino-acid biosynthesis; L-isoleucine biosynthesis; L-isoleucine from 2-oxobutanoate: step 3/4. It participates in amino-acid biosynthesis; L-valine biosynthesis; L-valine from pyruvate: step 3/4. Its function is as follows. Functions in the biosynthesis of branched-chain amino acids. Catalyzes the dehydration of (2R,3R)-2,3-dihydroxy-3-methylpentanoate (2,3-dihydroxy-3-methylvalerate) into 2-oxo-3-methylpentanoate (2-oxo-3-methylvalerate) and of (2R)-2,3-dihydroxy-3-methylbutanoate (2,3-dihydroxyisovalerate) into 2-oxo-3-methylbutanoate (2-oxoisovalerate), the penultimate precursor to L-isoleucine and L-valine, respectively. This chain is Dihydroxy-acid dehydratase, found in Brucella abortus (strain S19).